A 367-amino-acid chain; its full sequence is Sigma54-dependent transcriptional regulator SfnR (367 aa).

Residues 21–250 (QVFEDPKSQA…LENVIHHTLL (230 aa)) form the Sigma-54 factor interaction domain. ATP-binding positions include 49-56 (GETGTGKE) and 112-121 (ADGGTLFLDE).

In terms of biological role, involved in the dimethyl sulfide degradation pathway. Activates the expression of sfnG and sfnF. The chain is Sigma54-dependent transcriptional regulator SfnR from Pseudomonas fluorescens (strain Pf0-1).